Here is a 96-residue protein sequence, read N- to C-terminus: Putative pterin-4-alpha-carbinolamine dehydratase (96 aa).

It belongs to the pterin-4-alpha-carbinolamine dehydratase family.

The catalysed reaction is (4aS,6R)-4a-hydroxy-L-erythro-5,6,7,8-tetrahydrobiopterin = (6R)-L-erythro-6,7-dihydrobiopterin + H2O. The polypeptide is Putative pterin-4-alpha-carbinolamine dehydratase (Prochlorococcus marinus (strain MIT 9515)).